A 323-amino-acid chain; its full sequence is uncharacterized protein (323 aa).

Transmembrane regions (helical) follow at residues 8-28 (FLVI…MFME), 32-52 (LTLL…PFSL), and 92-112 (ITIF…CGIF).

It localises to the mitochondrion membrane. This is an uncharacterized protein from Neurospora crassa (strain ATCC 24698 / 74-OR23-1A / CBS 708.71 / DSM 1257 / FGSC 987).